A 288-amino-acid polypeptide reads, in one-letter code: 4-diphosphocytidyl-2-C-methyl-D-erythritol kinase (288 aa).

Lysine 8 is an active-site residue. An ATP-binding site is contributed by 90 to 100 (PLEAGLAGGSA). The active site involves aspartate 132.

It belongs to the GHMP kinase family. IspE subfamily.

It catalyses the reaction 4-CDP-2-C-methyl-D-erythritol + ATP = 4-CDP-2-C-methyl-D-erythritol 2-phosphate + ADP + H(+). It participates in isoprenoid biosynthesis; isopentenyl diphosphate biosynthesis via DXP pathway; isopentenyl diphosphate from 1-deoxy-D-xylulose 5-phosphate: step 3/6. Its function is as follows. Catalyzes the phosphorylation of the position 2 hydroxy group of 4-diphosphocytidyl-2C-methyl-D-erythritol. The chain is 4-diphosphocytidyl-2-C-methyl-D-erythritol kinase from Carboxydothermus hydrogenoformans (strain ATCC BAA-161 / DSM 6008 / Z-2901).